The chain runs to 327 residues: Small ribosomal subunit protein RACK1 (327 aa).

WD repeat units follow at residues 13–44, 61–91, 103–133, 148–180, 192–222, 233–262, and 293–323; these read AHTDMVTAIATPIDNSDTIVSASRDKSIIVWK, GHSHFVEDVVLSSDGQFALSGSWDGELRLWD, GHTKDVLSVAFSLDNRQIVSASRDRTIKLWN, GHRDWVSCVRFSPNTLQPTIVSASCDKTVKVWN, GHTGYVSTVAVSPDGSLCASGGKDGVVLLWD, EANSVIHALCFTPNRYWLCAATEQGIKIWD, and RKVIYCTSLNWSADGSTLFSGYTDGVIRVWG.

Belongs to the WD repeat G protein beta family. Ribosomal protein RACK1 subfamily.

The chain is Small ribosomal subunit protein RACK1 (GB1) from Brassica napus (Rape).